The sequence spans 263 residues: MSEHHFVFVHGAGHGGWCWYKLANSLRDNGHKATCIDLKGAGINPTDPNTVSSLDDYDEPLYAFLSQLPNDQKVILVSHSVGGGSMTAAMCLFPSKVSLAVYVAAAMVKPGTLIPERLKNVMKICSGLIEEETEKIWDFTFGNGPQNLPTSIMMKPEYVRDKFYNESPMEDYTLATTLLRPAPVMAFIGIMDIPGAPETDKIPRVYVKTGKDHLFEPVLQEVMLALWPPAHTFLLPDSDHSAFFSQPQELYQFLLQAASSLSP.

Residue S80 is the Acyl-ester intermediate of the active site. Active-site charge relay system residues include D212 and H240.

It belongs to the AB hydrolase superfamily. Methylesterase family.

It carries out the reaction methyl (indol-3-yl)acetate + H2O = (indol-3-yl)acetate + methanol + H(+). Its pathway is plant hormone biosynthesis. Functionally, methylesterase shown to have methyl indole-3-acetic acid (MeIAA) esterase activity in vitro. The polypeptide is Methylesterase 18 (Arabidopsis thaliana (Mouse-ear cress)).